Reading from the N-terminus, the 181-residue chain is RNA-binding protein (181 aa).

Residues 106–181 form a disordered region; sequence FLTSVNPGES…DANTRKSKRK (76 aa). Residues 141–157 show a composition bias toward basic residues; sequence RNSKKGAKKSSSARKKK. Residues 160–172 are compositionally biased toward low complexity; the sequence is SSNSETDLSSDSD.

It belongs to the phytoreovirus RNA-binding protein family.

The protein resides in the host cytoplasm. In terms of biological role, constituent of viral factories. Binds to ssRNA and dsRNA. This Rice dwarf virus (isolate Akita) (RDV) protein is RNA-binding protein.